The chain runs to 212 residues: Ras-like protein (212 aa).

15-22 (GGGGVGKS) contributes to the GTP binding site. The short motif at 37-45 (YDPTIEDSY) is the Effector region element. Residues 62-66 (DTAGQ) and 121-124 (NKCD) each bind GTP. 2 S-palmitoyl cysteine lipidation sites follow: C205 and C206. At C209 the chain carries Cysteine methyl ester. A lipid anchor (S-geranylgeranyl cysteine) is attached at C209. The propeptide at 210–212 (IVM) is removed in mature form.

This sequence belongs to the small GTPase superfamily. Ras family.

It localises to the cell membrane. The enzyme catalyses GTP + H2O = GDP + phosphate + H(+). Alternates between an inactive form bound to GDP and an active form bound to GTP. Activated by a guanine nucleotide-exchange factor (GEF) and inactivated by a GTPase-activating protein (GAP). The polypeptide is Ras-like protein (rasA) (Emericella nidulans (strain FGSC A4 / ATCC 38163 / CBS 112.46 / NRRL 194 / M139) (Aspergillus nidulans)).